A 439-amino-acid chain; its full sequence is Serine--tRNA ligase (439 aa).

237–239 (TAE) contacts L-serine. Position 268-270 (268-270 (RAE)) interacts with ATP. Glutamate 291 contributes to the L-serine binding site. 362–365 (EISS) contacts ATP. Serine 397 lines the L-serine pocket.

Belongs to the class-II aminoacyl-tRNA synthetase family. Type-1 seryl-tRNA synthetase subfamily. Homodimer. The tRNA molecule binds across the dimer.

It is found in the cytoplasm. It carries out the reaction tRNA(Ser) + L-serine + ATP = L-seryl-tRNA(Ser) + AMP + diphosphate + H(+). The catalysed reaction is tRNA(Sec) + L-serine + ATP = L-seryl-tRNA(Sec) + AMP + diphosphate + H(+). The protein operates within aminoacyl-tRNA biosynthesis; selenocysteinyl-tRNA(Sec) biosynthesis; L-seryl-tRNA(Sec) from L-serine and tRNA(Sec): step 1/1. Its function is as follows. Catalyzes the attachment of serine to tRNA(Ser). Is also able to aminoacylate tRNA(Sec) with serine, to form the misacylated tRNA L-seryl-tRNA(Sec), which will be further converted into selenocysteinyl-tRNA(Sec). This chain is Serine--tRNA ligase, found in Afipia carboxidovorans (strain ATCC 49405 / DSM 1227 / KCTC 32145 / OM5) (Oligotropha carboxidovorans).